A 239-amino-acid polypeptide reads, in one-letter code: Endonuclease V (239 aa).

Residues aspartate 50 and aspartate 118 each coordinate Mg(2+).

Belongs to the endonuclease V family. Mg(2+) is required as a cofactor.

Its subcellular location is the cytoplasm. It carries out the reaction Endonucleolytic cleavage at apurinic or apyrimidinic sites to products with a 5'-phosphate.. DNA repair enzyme involved in the repair of deaminated bases. Selectively cleaves double-stranded DNA at the second phosphodiester bond 3' to a deoxyinosine leaving behind the intact lesion on the nicked DNA. The polypeptide is Endonuclease V (Xylella fastidiosa (strain 9a5c)).